Consider the following 321-residue polypeptide: Protein BIG GRAIN 1-like E (321 aa).

The tract at residues Ala-134 to Lys-217 is disordered. Residues Gly-135–Thr-147 show a composition bias toward basic residues. A compositionally biased stretch (low complexity) spans Ile-172–Arg-206.

This sequence belongs to the BIG GRAIN 1 (BG1) plant protein family.

It is found in the cell membrane. Functionally, involved in auxin transport. Regulator of the auxin signaling pathway. The chain is Protein BIG GRAIN 1-like E from Arabidopsis thaliana (Mouse-ear cress).